The sequence spans 340 residues: Protein-arginine kinase (340 aa).

The Phosphagen kinase C-terminal domain maps to isoleucine 14–alanine 241. ATP contacts are provided by residues serine 17–arginine 21, arginine 112, arginine 163–methionine 167, and arginine 194–glutamate 199.

Belongs to the ATP:guanido phosphotransferase family.

It carries out the reaction L-arginyl-[protein] + ATP = N(omega)-phospho-L-arginyl-[protein] + ADP + H(+). Functionally, catalyzes the specific phosphorylation of arginine residues in proteins. This Clostridium tetani (strain Massachusetts / E88) protein is Protein-arginine kinase.